A 234-amino-acid chain; its full sequence is MRLVQLSRHSIAFPSPEGALREPNGLLALGGDLSPARLLMAYQRGIFPWFSPGDPILWWSPDPRAVLWPESLHISRSMKRFHKRSPYRVTMNYAFGQVIEGCASDREEGTWITRGVVEAYHRLHELGHAHSIEVWREDELVGGMYGVAQGTLFCGESMFSRMENASKTALLVFCEEFIGHGGKLIDCQVLNDHTASLGACEIPRRNYLNYLNQMRLGRLPNNFWVPRCLFSPQE.

Belongs to the L/F-transferase family.

It localises to the cytoplasm. It carries out the reaction N-terminal L-lysyl-[protein] + L-leucyl-tRNA(Leu) = N-terminal L-leucyl-L-lysyl-[protein] + tRNA(Leu) + H(+). The catalysed reaction is N-terminal L-arginyl-[protein] + L-leucyl-tRNA(Leu) = N-terminal L-leucyl-L-arginyl-[protein] + tRNA(Leu) + H(+). It catalyses the reaction L-phenylalanyl-tRNA(Phe) + an N-terminal L-alpha-aminoacyl-[protein] = an N-terminal L-phenylalanyl-L-alpha-aminoacyl-[protein] + tRNA(Phe). Functions in the N-end rule pathway of protein degradation where it conjugates Leu, Phe and, less efficiently, Met from aminoacyl-tRNAs to the N-termini of proteins containing an N-terminal arginine or lysine. The polypeptide is Leucyl/phenylalanyl-tRNA--protein transferase (Escherichia coli O157:H7 (strain EC4115 / EHEC)).